Reading from the N-terminus, the 338-residue chain is DNA-directed RNA polymerase subunit alpha (338 aa).

The alpha N-terminal domain (alpha-NTD) stretch occupies residues 1-233; the sequence is MLREEVAVST…DLFIPFLHAE (233 aa). Residues 266–338 are alpha C-terminal domain (alpha-CTD); sequence IALKFIFIDQ…IDLPKNKFSN (73 aa).

This sequence belongs to the RNA polymerase alpha chain family. As to quaternary structure, in plastids the minimal PEP RNA polymerase catalytic core is composed of four subunits: alpha, beta, beta', and beta''. When a (nuclear-encoded) sigma factor is associated with the core the holoenzyme is formed, which can initiate transcription.

It localises to the plastid. It is found in the chloroplast. It catalyses the reaction RNA(n) + a ribonucleoside 5'-triphosphate = RNA(n+1) + diphosphate. Its function is as follows. DNA-dependent RNA polymerase catalyzes the transcription of DNA into RNA using the four ribonucleoside triphosphates as substrates. The sequence is that of DNA-directed RNA polymerase subunit alpha from Nandina domestica (Heavenly bamboo).